We begin with the raw amino-acid sequence, 554 residues long: CTP synthase (554 aa).

Residues 1 to 265 (MTPLIFVTGG…DEIVVNQLKL (265 aa)) form an amidoligase domain region. A CTP-binding site is contributed by Ser13. A UTP-binding site is contributed by Ser13. ATP is bound at residue 14–19 (SLGKGI). 2 residues coordinate Mg(2+): Asp71 and Glu139. Residues 146-148 (DIE), 186-191 (KTKPTQ), and Lys222 contribute to the CTP site. UTP-binding positions include 186 to 191 (KTKPTQ) and Lys222. In terms of domain architecture, Glutamine amidotransferase type-1 spans 292-545 (TIAVVGKYVD…IRAARERKAG (254 aa)). Position 353 (Gly353) interacts with L-glutamine. The active-site Nucleophile; for glutamine hydrolysis is Cys380. Residues 381-384 (YGMQ), Glu404, and Arg471 contribute to the L-glutamine site. Active-site residues include His518 and Glu520.

The protein belongs to the CTP synthase family. As to quaternary structure, homotetramer.

It catalyses the reaction UTP + L-glutamine + ATP + H2O = CTP + L-glutamate + ADP + phosphate + 2 H(+). The enzyme catalyses L-glutamine + H2O = L-glutamate + NH4(+). It carries out the reaction UTP + NH4(+) + ATP = CTP + ADP + phosphate + 2 H(+). It functions in the pathway pyrimidine metabolism; CTP biosynthesis via de novo pathway; CTP from UDP: step 2/2. Allosterically activated by GTP, when glutamine is the substrate; GTP has no effect on the reaction when ammonia is the substrate. The allosteric effector GTP functions by stabilizing the protein conformation that binds the tetrahedral intermediate(s) formed during glutamine hydrolysis. Inhibited by the product CTP, via allosteric rather than competitive inhibition. In terms of biological role, catalyzes the ATP-dependent amination of UTP to CTP with either L-glutamine or ammonia as the source of nitrogen. Regulates intracellular CTP levels through interactions with the four ribonucleotide triphosphates. The polypeptide is CTP synthase (Stenotrophomonas maltophilia (strain K279a)).